The sequence spans 443 residues: MSTTDSIVSSQAKQSSWRKSDTTWTLGLFGTAIGAGVLFFPIRAGFGGLIPILLMLVLAYPIAFYCHRALARLCLSGSNPSGNITETVEEHFGKTGGVVITFLYFFAICPLLWIYGVTITNTFMTFWENQLQMPALNRGFVALFLLLLMAFVIWFGKDLMVKVMSYLVWPFIASLVLISLSLIPYWNSAVIDQVDLSNIELTGHDGILVTVWLGISIMVFSFNFSPIVSSFVVSKREEHEKEFGREFTERKCSQIISRASMLMVAVVMFFAFSCLFTLSPQNMADAKAQNIPVLSYLANHFASLSGTKSTFATVLEYGASIIALVAIFKSFFGHYLGTLEGLNGLVLKFGYKGDKTKVSMGKLNTISMIFIMGSTWVVAYANPNILDLIEAMGAPIIASLLCLLPMYAIRKAPSLAKYRGRLDNVFVTLIGLLTILNIVYKLF.

Transmembrane regions (helical) follow at residues 22 to 42 (TTWT…FFPI), 44 to 64 (AGFG…PIAF), 97 to 117 (GVVI…IYGV), 140 to 160 (FVAL…KDLM), 163 to 183 (VMSY…LSLI), 207 to 227 (ILVT…FSPI), 259 to 279 (ASML…FTLS), 319 to 339 (ASII…LGTL), 366 to 386 (ISMI…PNIL), 389 to 409 (IEAM…MYAI), and 423 to 443 (DNVF…YKLF).

The protein belongs to the amino acid/polyamine transporter 2 family. SdaC/TdcC subfamily.

The protein resides in the cell inner membrane. It catalyses the reaction L-threonine(in) + H(+)(in) = L-threonine(out) + H(+)(out). The catalysed reaction is L-serine(in) + H(+)(in) = L-serine(out) + H(+)(out). In terms of biological role, involved in the import of threonine and serine into the cell, with the concomitant import of a proton (symport system). This is Threonine/serine transporter TdcC from Salmonella newport (strain SL254).